Here is a 365-residue protein sequence, read N- to C-terminus: SWR1 complex subunit 2 (365 aa).

2 disordered regions span residues 43–83 (ALKE…NEKE) and 95–147 (PGKT…EGEK). Residues 48–74 (EHDDEYEAEREVADEFDSDFNDDEPEP) are compositionally biased toward acidic residues. Residues 99 to 108 (ASKKKKKKTK) are compositionally biased toward basic residues. A compositionally biased stretch (basic and acidic residues) spans 118–132 (GDEKPGEELGNKEQE). 2 coiled-coil regions span residues 123-150 (GEELGNKEQEEKEENEAQEDMEGEKVIR) and 184-225 (GEEK…KAIV). The segment covering 133 to 144 (EKEENEAQEDME) has biased composition (acidic residues). Residues 333–365 (RTKIPKSNKSFSLRSSARFLSSESEEESEEDSD) are disordered. Residues 342 to 354 (SFSLRSSARFLSS) are compositionally biased toward low complexity. The span at 355 to 365 (ESEEESEEDSD) shows a compositional bias: acidic residues.

Belongs to the VPS72/YL1 family. Component of the SWR1 chromatin-remodeling complex composed of at least ARP6/ESD1/SUF3, PIE1, SWC6, SWC2 and H2AZs (HTA8, HTA9, HTA11). Interacts directly with SWC6 and H2AZs, but not with ARP6.

Its function is as follows. Component of the SWR1 complex which mediates the ATP-dependent exchange of histone H2A for the H2A variant H2A.F/Z leading to transcriptional regulation of selected genes (e.g. FLC) by chromatin remodeling. The protein is SWR1 complex subunit 2 (SWC2) of Arabidopsis thaliana (Mouse-ear cress).